The chain runs to 175 residues: ATP-dependent protease subunit HslV (175 aa).

Residue Thr-2 is part of the active site. Positions 159, 162, and 165 each coordinate Na(+).

Belongs to the peptidase T1B family. HslV subfamily. In terms of assembly, a double ring-shaped homohexamer of HslV is capped on each side by a ring-shaped HslU homohexamer. The assembly of the HslU/HslV complex is dependent on binding of ATP.

Its subcellular location is the cytoplasm. It catalyses the reaction ATP-dependent cleavage of peptide bonds with broad specificity.. Allosterically activated by HslU binding. Functionally, protease subunit of a proteasome-like degradation complex believed to be a general protein degrading machinery. In Ligilactobacillus salivarius (strain UCC118) (Lactobacillus salivarius), this protein is ATP-dependent protease subunit HslV.